The chain runs to 41 residues: MARTKQTARKSTGAKAPRKQLASKAARKSAPATGGIKKPHR.

The interval M1 to R41 is disordered.

Belongs to the histone H3 family. As to quaternary structure, the nucleosome is a histone octamer containing two molecules each of H2A, H2B, H3 and H4 assembled in one H3-H4 heterotetramer and two H2A-H2B heterodimers. The octamer wraps approximately 147 bp of DNA.

It is found in the nucleus. Its subcellular location is the chromosome. Its function is as follows. Core component of nucleosome. Nucleosomes wrap and compact DNA into chromatin, limiting DNA accessibility to the cellular machineries which require DNA as a template. Histones thereby play a central role in transcription regulation, DNA repair, DNA replication and chromosomal stability. DNA accessibility is regulated via a complex set of post-translational modifications of histones, also called histone code, and nucleosome remodeling. This chain is Histone H3.2, found in Tetrahymena australis.